A 699-amino-acid polypeptide reads, in one-letter code: Elongation factor G (699 aa).

The tr-type G domain occupies 8 to 288 (EDYRNFGIMA…AVVDYLPSPL (281 aa)). GTP-binding positions include 17–24 (AHIDAGKT), 86–90 (DTPGH), and 140–143 (NKMD).

Belongs to the TRAFAC class translation factor GTPase superfamily. Classic translation factor GTPase family. EF-G/EF-2 subfamily.

The protein resides in the cytoplasm. In terms of biological role, catalyzes the GTP-dependent ribosomal translocation step during translation elongation. During this step, the ribosome changes from the pre-translocational (PRE) to the post-translocational (POST) state as the newly formed A-site-bound peptidyl-tRNA and P-site-bound deacylated tRNA move to the P and E sites, respectively. Catalyzes the coordinated movement of the two tRNA molecules, the mRNA and conformational changes in the ribosome. This Rhizobium etli (strain CIAT 652) protein is Elongation factor G.